The following is a 507-amino-acid chain: Probable serine/threonine-protein kinase DDB_G0268078 (507 aa).

One can recognise a Protein kinase domain in the interval 4–286 (YQFIKQVGDG…PLQALQHRYF (283 aa)). ATP-binding positions include 10 to 18 (VGDGAYGDV) and Lys-33. Residue Asp-125 is the Proton acceptor of the active site. Residues 323–347 (NYSNNNNNNNLNSNSENLNNVNKNN) are compositionally biased toward low complexity. Disordered stretches follow at residues 323 to 364 (NYSN…PKNS), 381 to 404 (NVNN…KLDS), and 428 to 507 (QQPP…NSKL). Residues 348–361 (QQPHSPQKIQTPKP) are compositionally biased toward polar residues. Positions 381-399 (NVNNNNNNYNSNTTSGYYN) are enriched in low complexity. Residues 429-450 (QPPPQSQPPQSQPPPQSQPPPI) are compositionally biased toward pro residues. Residues 451–470 (LTQQQQQQQQQQQQQQQLPS) are compositionally biased toward low complexity. Polar residues-rich tracts occupy residues 471–481 (KTTIYHNTNHL) and 491–507 (RGIS…NSKL).

The protein belongs to the protein kinase superfamily. CMGC Ser/Thr protein kinase family. CDC2/CDKX subfamily.

It catalyses the reaction L-seryl-[protein] + ATP = O-phospho-L-seryl-[protein] + ADP + H(+). It carries out the reaction L-threonyl-[protein] + ATP = O-phospho-L-threonyl-[protein] + ADP + H(+). In Dictyostelium discoideum (Social amoeba), this protein is Probable serine/threonine-protein kinase DDB_G0268078.